Reading from the N-terminus, the 411-residue chain is Acetylornithine aminotransferase, mitochondrial (411 aa).

Residue lysine 262 is modified to N6-(pyridoxal phosphate)lysine.

The protein belongs to the class-III pyridoxal-phosphate-dependent aminotransferase family. Pyridoxal 5'-phosphate is required as a cofactor.

It localises to the mitochondrion matrix. The catalysed reaction is N(2)-acetyl-L-ornithine + 2-oxoglutarate = N-acetyl-L-glutamate 5-semialdehyde + L-glutamate. The protein operates within amino-acid biosynthesis; L-arginine biosynthesis; N(2)-acetyl-L-ornithine from L-glutamate: step 4/4. The chain is Acetylornithine aminotransferase, mitochondrial (ARG8) from Yarrowia lipolytica (strain CLIB 122 / E 150) (Yeast).